The chain runs to 142 residues: UPF0102 protein Bcen2424_0290 (142 aa).

The segment covering 1–19 (MCHAAPARPEGARGRPPSG) has biased composition (low complexity). Positions 1 to 27 (MCHAAPARPEGARGRPPSGDNFSGAAR) are disordered.

This sequence belongs to the UPF0102 family.

The chain is UPF0102 protein Bcen2424_0290 from Burkholderia cenocepacia (strain HI2424).